The primary structure comprises 1403 residues: E3 ubiquitin-protein ligase SNT2 (1403 aa).

Residues Ser40–Ala62 form a disordered region. Positions Lys45 to Ala62 are enriched in polar residues. A BAH domain is found at Val121–Tyr258. The PHD-type 1 zinc-finger motif lies at Asp317–Lys369. Positions Leu555 to Arg606 constitute an SANT domain. Residues Arg1038 to Asp1097 form a PHD-type 2 zinc finger. Residues Cys1041–Ser1095 form an RING-type; degenerate zinc finger. Residues Thr1105 to Ile1153 form a C2HC pre-PHD-type zinc finger. Residues Phe1177 to Val1231 form a PHD-type 3; degenerate zinc finger.

In terms of assembly, component of the Snt2C complex composed of SNT2, ECM5 and RPD3. Interacts with the E2 ubiquitin-conjugating enzyme UBC4 and histones H3 and H4. Binding is enhanced to methylated histone H3K36me3.

Its subcellular location is the cytoplasm. It is found in the nucleus. It catalyses the reaction S-ubiquitinyl-[E2 ubiquitin-conjugating enzyme]-L-cysteine + [acceptor protein]-L-lysine = [E2 ubiquitin-conjugating enzyme]-L-cysteine + N(6)-ubiquitinyl-[acceptor protein]-L-lysine.. Its function is as follows. Transcriptional regulator that, together with ECM5, recruits histone deacetylase RPD3 to a small number of promoters of stress-response genes in response to oxidative stress. Probable ubiquitin-protein ligase involved in the degradation-related ubiquitination of histones. Contributes to the post-translational regulation of histone protein levels by polyubiquitination of excess histones for subsequent degradation. The sequence is that of E3 ubiquitin-protein ligase SNT2 from Saccharomyces cerevisiae (strain ATCC 204508 / S288c) (Baker's yeast).